Reading from the N-terminus, the 400-residue chain is 1-deoxy-D-xylulose 5-phosphate reductoisomerase (400 aa).

NADPH-binding residues include Thr10, Gly11, Ser12, Ile13, Gly36, Asn38, and Asn124. Lys125 contributes to the 1-deoxy-D-xylulose 5-phosphate binding site. Glu126 is a binding site for NADPH. Residue Asp150 coordinates Mn(2+). 4 residues coordinate 1-deoxy-D-xylulose 5-phosphate: Ser151, Glu152, Ser186, and His209. A Mn(2+)-binding site is contributed by Glu152. Gly215 provides a ligand contact to NADPH. Ser222, Asn227, Lys228, and Glu231 together coordinate 1-deoxy-D-xylulose 5-phosphate. Glu231 contacts Mn(2+).

The protein belongs to the DXR family. Mg(2+) is required as a cofactor. It depends on Mn(2+) as a cofactor.

It catalyses the reaction 2-C-methyl-D-erythritol 4-phosphate + NADP(+) = 1-deoxy-D-xylulose 5-phosphate + NADPH + H(+). It functions in the pathway isoprenoid biosynthesis; isopentenyl diphosphate biosynthesis via DXP pathway; isopentenyl diphosphate from 1-deoxy-D-xylulose 5-phosphate: step 1/6. Catalyzes the NADPH-dependent rearrangement and reduction of 1-deoxy-D-xylulose-5-phosphate (DXP) to 2-C-methyl-D-erythritol 4-phosphate (MEP). The chain is 1-deoxy-D-xylulose 5-phosphate reductoisomerase from Aliivibrio salmonicida (strain LFI1238) (Vibrio salmonicida (strain LFI1238)).